The primary structure comprises 290 residues: Eukaryotic translation initiation factor 3 subunit G (290 aa).

Residues 1 to 12 (MADSKQSNRDWA) are compositionally biased toward basic and acidic residues. Disordered regions lie at residues 1–30 (MADSKQSNRDWAADDVDADELPPTTESTDA) and 173–192 (AGETGGKYVPPSQRAGATGA). The RRM domain occupies 204-285 (PTLRVTSLSI…LILEVAWSQP (82 aa)).

This sequence belongs to the eIF-3 subunit G family. Component of the eukaryotic translation initiation factor 3 (eIF-3) complex.

It localises to the cytoplasm. RNA-binding component of the eukaryotic translation initiation factor 3 (eIF-3) complex, which is involved in protein synthesis of a specialized repertoire of mRNAs and, together with other initiation factors, stimulates binding of mRNA and methionyl-tRNAi to the 40S ribosome. The eIF-3 complex specifically targets and initiates translation of a subset of mRNAs involved in cell proliferation. This subunit can bind 18S rRNA. The protein is Eukaryotic translation initiation factor 3 subunit G of Cryptococcus neoformans var. neoformans serotype D (strain B-3501A) (Filobasidiella neoformans).